Here is a 577-residue protein sequence, read N- to C-terminus: Arginine--tRNA ligase (577 aa).

Positions 122 to 132 (PNVAKEMHVGH) match the 'HIGH' region motif.

The protein belongs to the class-I aminoacyl-tRNA synthetase family. As to quaternary structure, monomer.

The protein resides in the cytoplasm. It carries out the reaction tRNA(Arg) + L-arginine + ATP = L-arginyl-tRNA(Arg) + AMP + diphosphate. The protein is Arginine--tRNA ligase of Vibrio parahaemolyticus serotype O3:K6 (strain RIMD 2210633).